Reading from the N-terminus, the 268-residue chain is Interleukin-1 alpha (268 aa).

Residues Met1–Arg112 constitute a propeptide that is removed on maturation. Lys82 carries the post-translational modification N6-acetyllysine. The interval Lys82–Leu86 is nuclear localization signal (NLS). Ser87 bears the Phosphoserine mark. Residues Asn102 and Asn141 are each glycosylated (N-linked (GlcNAc...) asparagine).

This sequence belongs to the IL-1 family. Monomer. Interacts with TMED10; the interaction mediates the translocation from the cytoplasm into the ERGIC (endoplasmic reticulum-Golgi intermediate compartment) and thereby secretion. Interacts with IL1R1. Interacts with S100A13; this interaction is the first step in the export of IL1A, followed by direct translocation of this complex across the plasma membrane. Post-translationally, acetylated within its nuclear localization sequence, which impacts subcellular localization. Proteolytic processed by CAPN1 in a calcium-dependent manner. Cleavage from 31 kDa precursor to 18 kDa biologically active molecules. In terms of processing, phosphorylated. Phosphorylation greatly enhances susceptibility to digestion and promotes the conversion of pre-IL1A alpha to the biologically active IL1A.

Its subcellular location is the nucleus. The protein resides in the cytoplasm. It localises to the secreted. Functionally, cytokine constitutively present intracellularly in nearly all resting non-hematopoietic cells that plays an important role in inflammation and bridges the innate and adaptive immune systems. After binding to its receptor IL1R1 together with its accessory protein IL1RAP, forms the high affinity interleukin-1 receptor complex. Signaling involves the recruitment of adapter molecules such as MYD88, IRAK1 or IRAK4. In turn, mediates the activation of NF-kappa-B and the three MAPK pathways p38, p42/p44 and JNK pathways. Within the cell, acts as an alarmin and cell death results in its liberation in the extracellular space after disruption of the cell membrane to induce inflammation and alert the host to injury or damage. In addition to its role as a danger signal, which occurs when the cytokine is passively released by cell necrosis, directly senses DNA damage and acts as signal for genotoxic stress without loss of cell integrity. This is Interleukin-1 alpha (IL1A) from Lama glama (Llama).